Consider the following 404-residue polypeptide: Cysteine desulfurase IscS (404 aa).

Residues 75-76, asparagine 155, glutamine 183, and 203-205 contribute to the pyridoxal 5'-phosphate site; these read AT and SAH. Lysine 206 carries the N6-(pyridoxal phosphate)lysine modification. Threonine 243 contributes to the pyridoxal 5'-phosphate binding site. The active-site Cysteine persulfide intermediate is cysteine 328. Cysteine 328 serves as a coordination point for [2Fe-2S] cluster.

This sequence belongs to the class-V pyridoxal-phosphate-dependent aminotransferase family. NifS/IscS subfamily. Homodimer. Forms a heterotetramer with IscU, interacts with other sulfur acceptors. It depends on pyridoxal 5'-phosphate as a cofactor.

The protein localises to the cytoplasm. The catalysed reaction is (sulfur carrier)-H + L-cysteine = (sulfur carrier)-SH + L-alanine. It functions in the pathway cofactor biosynthesis; iron-sulfur cluster biosynthesis. Master enzyme that delivers sulfur to a number of partners involved in Fe-S cluster assembly, tRNA modification or cofactor biosynthesis. Catalyzes the removal of elemental sulfur atoms from cysteine to produce alanine. Functions as a sulfur delivery protein for Fe-S cluster synthesis onto IscU, an Fe-S scaffold assembly protein, as well as other S acceptor proteins. This chain is Cysteine desulfurase IscS, found in Buchnera aphidicola subsp. Acyrthosiphon pisum (strain 5A).